The chain runs to 272 residues: NAD kinase (272 aa).

The active-site Proton acceptor is the Asp-50. NAD(+)-binding positions include 50–51 (DG), 126–127 (NE), Arg-152, Asp-154, 165–170 (TAYNKS), and Ala-189.

Belongs to the NAD kinase family. A divalent metal cation is required as a cofactor.

Its subcellular location is the cytoplasm. The enzyme catalyses NAD(+) + ATP = ADP + NADP(+) + H(+). Its function is as follows. Involved in the regulation of the intracellular balance of NAD and NADP, and is a key enzyme in the biosynthesis of NADP. Catalyzes specifically the phosphorylation on 2'-hydroxyl of the adenosine moiety of NAD to yield NADP. The chain is NAD kinase from Streptococcus pneumoniae serotype 19F (strain G54).